The chain runs to 860 residues: DNA mismatch repair protein MutS (860 aa).

ATP is bound at residue 621-628; sequence GPNMGGKS.

Belongs to the DNA mismatch repair MutS family.

Its function is as follows. This protein is involved in the repair of mismatches in DNA. It is possible that it carries out the mismatch recognition step. This protein has a weak ATPase activity. The sequence is that of DNA mismatch repair protein MutS from Salmonella arizonae (strain ATCC BAA-731 / CDC346-86 / RSK2980).